The chain runs to 307 residues: Ribosomal RNA small subunit methyltransferase H (307 aa).

Residues 38–40 (GGH), Asp58, Phe82, Asp99, and Gln106 contribute to the S-adenosyl-L-methionine site.

It belongs to the methyltransferase superfamily. RsmH family.

It localises to the cytoplasm. The catalysed reaction is cytidine(1402) in 16S rRNA + S-adenosyl-L-methionine = N(4)-methylcytidine(1402) in 16S rRNA + S-adenosyl-L-homocysteine + H(+). Functionally, specifically methylates the N4 position of cytidine in position 1402 (C1402) of 16S rRNA. The polypeptide is Ribosomal RNA small subunit methyltransferase H (Variovorax paradoxus (strain S110)).